Here is a 313-residue protein sequence, read N- to C-terminus: Formimidoylglutamase (313 aa).

Positions 130, 155, 157, 159, 241, and 243 each coordinate Mn(2+).

This sequence belongs to the arginase family. Mn(2+) is required as a cofactor.

The catalysed reaction is N-formimidoyl-L-glutamate + H2O = formamide + L-glutamate. It participates in amino-acid degradation; L-histidine degradation into L-glutamate; L-glutamate from N-formimidoyl-L-glutamate (hydrolase route): step 1/1. Its function is as follows. Catalyzes the conversion of N-formimidoyl-L-glutamate to L-glutamate and formamide. The chain is Formimidoylglutamase from Salmonella paratyphi B (strain ATCC BAA-1250 / SPB7).